A 355-amino-acid chain; its full sequence is Chemerin-like receptor 2 (355 aa).

Residues M1–S41 are Extracellular-facing. The N-linked (GlcNAc...) asparagine glycan is linked to N14. Residues L42 to F62 traverse the membrane as a helical segment. Residues T63 to T73 are Cytoplasmic-facing. A helical membrane pass occupies residues L74–I94. Residues S95 to A112 are Extracellular-facing. Residues C110 and C187 are joined by a disulfide bond. Residues N113–L133 form a helical membrane-spanning segment. The Cytoplasmic segment spans residues D134 to S154. The helical transmembrane segment at L155 to F175 threads the bilayer. Over R176–K210 the chain is Extracellular. Residues F211–F231 form a helical membrane-spanning segment. Over K232–T247 the chain is Cytoplasmic. The chain crosses the membrane as a helical span at residues I248–W268. Topologically, residues E269–I286 are extracellular. Residues P287–I307 form a helical membrane-spanning segment. Residues S308–Q355 lie on the Cytoplasmic side of the membrane.

The protein belongs to the chemokine-like receptor (CMKLR) family. Expressed in hippocampus.

It is found in the cell membrane. Receptor for chemoattractant adipokine chemerin/RARRES2 suggesting a role for this receptor in the regulation of inflammation and energy homesotasis. Signals mainly via beta-arrestin pathway. Binding of RARRES2 activates weakly G proteins, calcium mobilization and MAPK1/MAPK3 (ERK1/2) phosphorylation too. Also acts as a receptor for TAFA1, mediates its effects on neuronal stem-cell proliferation and differentiation via the activation of ROCK/ERK and ROCK/STAT3 signaling pathway. Its function is as follows. (Microbial infection) Coreceptor for HIV-1. This Homo sapiens (Human) protein is Chemerin-like receptor 2.